The primary structure comprises 356 residues: tRNA N6-adenosine threonylcarbamoyltransferase (356 aa).

Fe cation-binding residues include His114 and His118. Residues 136–140, Asp169, Gly182, and Asn280 contribute to the substrate site; that span reads LVSGG. Asp308 lines the Fe cation pocket. Positions 333 to 356 are disordered; it reads ARPRWPLDNSQPALLGSGKKGAKA.

This sequence belongs to the KAE1 / TsaD family. Requires Fe(2+) as cofactor.

The protein localises to the cytoplasm. The enzyme catalyses L-threonylcarbamoyladenylate + adenosine(37) in tRNA = N(6)-L-threonylcarbamoyladenosine(37) in tRNA + AMP + H(+). In terms of biological role, required for the formation of a threonylcarbamoyl group on adenosine at position 37 (t(6)A37) in tRNAs that read codons beginning with adenine. Is involved in the transfer of the threonylcarbamoyl moiety of threonylcarbamoyl-AMP (TC-AMP) to the N6 group of A37, together with TsaE and TsaB. TsaD likely plays a direct catalytic role in this reaction. The sequence is that of tRNA N6-adenosine threonylcarbamoyltransferase from Dinoroseobacter shibae (strain DSM 16493 / NCIMB 14021 / DFL 12).